A 51-amino-acid chain; its full sequence is Insulin (51 aa).

3 cysteine pairs are disulfide-bonded: cysteine 7–cysteine 37, cysteine 19–cysteine 50, and cysteine 36–cysteine 41.

The protein belongs to the insulin family. Heterodimer of a B chain and an A chain linked by two disulfide bonds.

It localises to the secreted. In terms of biological role, insulin decreases blood glucose concentration. It increases cell permeability to monosaccharides, amino acids and fatty acids. It accelerates glycolysis, the pentose phosphate cycle, and glycogen synthesis in liver. The sequence is that of Insulin (INS) from Acomys cahirinus (Cairo spiny mouse).